A 253-amino-acid polypeptide reads, in one-letter code: ATP synthase subunit b 2 (253 aa).

A helical membrane pass occupies residues 9 to 27; that stretch reads VLEIVNFLVLVWLLKRFLY.

This sequence belongs to the ATPase B chain family. In terms of assembly, F-type ATPases have 2 components, F(1) - the catalytic core - and F(0) - the membrane proton channel. F(1) has five subunits: alpha(3), beta(3), gamma(1), delta(1), epsilon(1). F(0) has three main subunits: a(1), b(2) and c(10-14). The alpha and beta chains form an alternating ring which encloses part of the gamma chain. F(1) is attached to F(0) by a central stalk formed by the gamma and epsilon chains, while a peripheral stalk is formed by the delta and b chains.

It is found in the cell inner membrane. F(1)F(0) ATP synthase produces ATP from ADP in the presence of a proton or sodium gradient. F-type ATPases consist of two structural domains, F(1) containing the extramembraneous catalytic core and F(0) containing the membrane proton channel, linked together by a central stalk and a peripheral stalk. During catalysis, ATP synthesis in the catalytic domain of F(1) is coupled via a rotary mechanism of the central stalk subunits to proton translocation. In terms of biological role, component of the F(0) channel, it forms part of the peripheral stalk, linking F(1) to F(0). The protein is ATP synthase subunit b 2 of Methylococcus capsulatus (strain ATCC 33009 / NCIMB 11132 / Bath).